The primary structure comprises 236 residues: uncharacterized protein (236 aa).

The segment at 1 to 29 is disordered; sequence MNNEKNKQDRENLNRQDERKSSEIKSERK.

This is an uncharacterized protein from Staphylococcus aureus.